Consider the following 115-residue polypeptide: Delta-hexatoxin-Hi1a (115 aa).

The N-terminal stretch at 1 to 18 (MKVIATLYGLLFLTVVLG) is a signal peptide. The propeptide occupies 19–73 (DITEGNENDLVENFREELSEADIPLLKKLEAIEDALLEKDFLPYEEEDRNARPKR). 4 disulfides stabilise this stretch: Cys-74–Cys-88, Cys-81–Cys-93, Cys-87–Cys-104, and Cys-89–Cys-115.

The protein belongs to the neurotoxin 06 (delta-actx) family. Expressed by the venom gland.

It localises to the secreted. Neurotoxin that slows inactivation of voltage-gated sodium channels (Nav). In vivo, is lethal to both vertebrates and insects. The protein is Delta-hexatoxin-Hi1a of Hadronyche infensa (Fraser island funnel-web spider).